The chain runs to 238 residues: Ribosomal RNA small subunit methyltransferase G (238 aa).

S-adenosyl-L-methionine contacts are provided by residues glycine 77, phenylalanine 82, 128–129 (AE), and arginine 147.

It belongs to the methyltransferase superfamily. RNA methyltransferase RsmG family.

It localises to the cytoplasm. Functionally, specifically methylates the N7 position of guanine in position 535 of 16S rRNA. The polypeptide is Ribosomal RNA small subunit methyltransferase G (Lysinibacillus sphaericus (strain C3-41)).